Reading from the N-terminus, the 31-residue chain is Phospholipase A2 homolog P-elapitoxin-Aa1a beta chain (31 aa).

This sequence belongs to the phospholipase A2 family. Group I subfamily. Heterotrimer of alpha, beta and gamma chains, each related to PLA2. Expressed by the venom gland.

The protein resides in the secreted. In terms of biological role, heterotrimer: Snake venom phospholipase A2 (PLA2) that has presynaptic neurotoxicity. Inhibits nerve-evoked twitch contractions but not responses to cholinergic agonists acetylcholine and carbachol and to depolarizing agonist KCl. Causes a fade in tetanic contractions. Displays a triphasic mode of action with depression, enhancement and blockade of neurotransmission. Does not display myotoxic activity such as changes in baseline muscle tension or inhibition of directly stimulated muscle twitches. All subunits are necessary for maximum toxicity. Functionally, monomer: The beta chain has no enzymatic activity and is not toxic by itself. The sequence is that of Phospholipase A2 homolog P-elapitoxin-Aa1a beta chain from Acanthophis antarcticus (Common death adder).